The sequence spans 2531 residues: Probable polyketide synthase 26 (2531 aa).

Positions 10–433 (QEDIAIIGFR…GSNCCLVLTE (424 aa)) constitute a Ketosynthase family 3 (KS3) domain. Residues C174, H316, and H356 each act as for beta-ketoacyl synthase activity in the active site. Residues 620-653 (GINPSFIVGHSLGELPMAFCSGMIDFDTVCYLLY) form an acyl/malonyl transferase region. S630 serves as the catalytic For acyl/malonyl transferase activity. An N-terminal hotdog fold region spans residues 915 to 1036 (MDTLGFSNEK…ANYHLSHRDD (122 aa)). One can recognise a PKS/mFAS DH domain in the interval 915–1206 (MDTLGFSNEK…LKSLIPLKDP (292 aa)). The active-site Proton acceptor; for dehydratase activity is H948. A C-terminal hotdog fold region spans residues 1055–1206 (NLTKLSKNQF…LKSLIPLKDP (152 aa)). D1117 (proton donor; for dehydratase activity) is an active-site residue. A Carrier domain is found at 2431–2509 (ASENPVKDLL…DNIKILTDSY (79 aa)). An O-(pantetheine 4'-phosphoryl)serine modification is found at S2468.

Pantetheine 4'-phosphate serves as cofactor.

Its function is as follows. Probable polyketide synthase. This Dictyostelium discoideum (Social amoeba) protein is Probable polyketide synthase 26 (pks26).